The primary structure comprises 69 residues: Lantibiotic lichenicidin A2 (69 aa).

Residues 1 to 37 constitute a propeptide that is removed on maturation; that stretch reads MKNSAAREAFKGANHPAGMVSEEELKALVGGNDVNPE. 2-oxobutanoic acid is present on Thr38. A (Z)-2,3-didehydrobutyrine mark is found at Thr39, Thr42, and Thr43. Residues 44–48 constitute a cross-link (lanthionine (Ser-Cys)); sequence SSWTC. Ser45 carries the 2,3-didehydroalanine (Ser) modification. (Z)-2,3-didehydrobutyrine occurs at positions 50 and 54. The segment at residues 56 to 60 is a cross-link (lanthionine (Ser-Cys)); that stretch reads SASLC. 2 cross-links (beta-methyllanthionine (Thr-Cys)) span residues 62-65 and 66-69; these read TTKC and TSRC. At Thr63 the chain carries (Z)-2,3-didehydrobutyrine.

Maturation of lantibiotics involves the enzymatic conversion of Thr, and Ser into dehydrated AA and the formation of thioether bonds with cysteine. This is followed by membrane translocation and cleavage of the modified precursor.

The protein resides in the secreted. It is found in the cell wall. Its function is as follows. Lanthionine-containing peptide antibiotic (lantibiotic) active on Gram-positive bacteria. The bactericidal activity of lantibiotics is based on depolarization of energized bacterial cytoplasmic membranes, initiated by the formation of aqueous transmembrane pores. When present individually, LchA2 exhibits activity towards L.lactis HP. When combined with LchA1, it displays activity towards a broad spectrum of non-pathogenic and pathogenic Gram-positive bacteria including strains of L.monocytogenes, methicillin-resistant S.aureus, S.pneumoniae and strains of vancomycin-resistant enterococci, but not towards E.faecium L4001 and BM4147-1. Combined LchA1 and LchA2 peptides also inhibit Bacillus sp. HIL-Y85/54728, L.lactis DPC3417 and B.halodurans C-125, which produce lantibiotics themselves. Inactivated by proteinase K and pronase E, but not by trypsin and chymotrypsin. In Bacillus licheniformis (strain ATCC 14580 / DSM 13 / JCM 2505 / CCUG 7422 / NBRC 12200 / NCIMB 9375 / NCTC 10341 / NRRL NRS-1264 / Gibson 46), this protein is Lantibiotic lichenicidin A2.